A 63-amino-acid chain; its full sequence is Odorranain-B1 (63 aa).

A signal peptide spans Met1–Cys22. The propeptide occupies Glu23–Val41.

It belongs to the frog skin active peptide (FSAP) family. Brevinin subfamily. Expressed by the skin glands.

The protein localises to the secreted. This Odorrana hainanensis (Odor frog) protein is Odorranain-B1.